Reading from the N-terminus, the 103-residue chain is Cell division suppressor protein YneA (103 aa).

In terms of domain architecture, LysM spans 36–87; that stretch reads VKIKVQDGDTLWSLADHVAEKKHINKEDFIEWVTENNHLQTADIKPGDELIL.

The protein belongs to the YneA family.

The protein localises to the cytoplasm. Inhibits cell division during the SOS response. Affects a later stage of the cell division protein assembly, after the assembly of the Z ring, by probably suppressing recruitment of FtsL and/or DivIC to the division machinery. In Bacillus velezensis (strain DSM 23117 / BGSC 10A6 / LMG 26770 / FZB42) (Bacillus amyloliquefaciens subsp. plantarum), this protein is Cell division suppressor protein YneA.